The sequence spans 98 residues: Large ribosomal subunit protein uL23c (98 aa).

This sequence belongs to the universal ribosomal protein uL23 family. As to quaternary structure, part of the 50S ribosomal subunit.

It is found in the plastid. It localises to the chloroplast. Its function is as follows. Binds to 23S rRNA. The protein is Large ribosomal subunit protein uL23c (rpl23) of Thalassiosira pseudonana (Marine diatom).